We begin with the raw amino-acid sequence, 482 residues long: Catalase (482 aa).

Active-site residues include H53 and N126. Residue Y336 coordinates heme.

Belongs to the catalase family. Requires heme as cofactor.

It is found in the periplasm. The enzyme catalyses 2 H2O2 = O2 + 2 H2O. Its function is as follows. Decomposes hydrogen peroxide into water and oxygen; serves to protect cells from the toxic effects of hydrogen peroxide. Could protect cells in nodules which have a high potential to produce hydrogen peroxide because of the strong reducing conditions required for nitrogen fixation and the action of several proteins. The protein is Catalase (katA) of Aliivibrio fischeri (strain ATCC 700601 / ES114) (Vibrio fischeri).